Reading from the N-terminus, the 180-residue chain is Crossover junction endodeoxyribonuclease RuvC (180 aa).

Active-site residues include D7, E66, and D138. Mg(2+)-binding residues include D7, E66, and D138.

The protein belongs to the RuvC family. In terms of assembly, homodimer which binds Holliday junction (HJ) DNA. The HJ becomes 2-fold symmetrical on binding to RuvC with unstacked arms; it has a different conformation from HJ DNA in complex with RuvA. In the full resolvosome a probable DNA-RuvA(4)-RuvB(12)-RuvC(2) complex forms which resolves the HJ. It depends on Mg(2+) as a cofactor.

Its subcellular location is the cytoplasm. It catalyses the reaction Endonucleolytic cleavage at a junction such as a reciprocal single-stranded crossover between two homologous DNA duplexes (Holliday junction).. The RuvA-RuvB-RuvC complex processes Holliday junction (HJ) DNA during genetic recombination and DNA repair. Endonuclease that resolves HJ intermediates. Cleaves cruciform DNA by making single-stranded nicks across the HJ at symmetrical positions within the homologous arms, yielding a 5'-phosphate and a 3'-hydroxyl group; requires a central core of homology in the junction. The consensus cleavage sequence is 5'-(A/T)TT(C/G)-3'. Cleavage occurs on the 3'-side of the TT dinucleotide at the point of strand exchange. HJ branch migration catalyzed by RuvA-RuvB allows RuvC to scan DNA until it finds its consensus sequence, where it cleaves and resolves the cruciform DNA. This is Crossover junction endodeoxyribonuclease RuvC from Paraburkholderia xenovorans (strain LB400).